The sequence spans 282 residues: 2-dehydro-3-deoxyphosphooctonate aldolase (282 aa).

Belongs to the KdsA family.

The protein localises to the cytoplasm. The catalysed reaction is D-arabinose 5-phosphate + phosphoenolpyruvate + H2O = 3-deoxy-alpha-D-manno-2-octulosonate-8-phosphate + phosphate. The protein operates within carbohydrate biosynthesis; 3-deoxy-D-manno-octulosonate biosynthesis; 3-deoxy-D-manno-octulosonate from D-ribulose 5-phosphate: step 2/3. It functions in the pathway bacterial outer membrane biogenesis; lipopolysaccharide biosynthesis. The chain is 2-dehydro-3-deoxyphosphooctonate aldolase from Shewanella pealeana (strain ATCC 700345 / ANG-SQ1).